The chain runs to 267 residues: Glutamate 5-kinase (267 aa).

Position 14 (Lys-14) interacts with ATP. Substrate-binding residues include Ser-54, Asp-141, and Asn-157. ATP-binding positions include 177 to 178 and 219 to 225; these read SD and TGGMMSK.

Belongs to the glutamate 5-kinase family.

It is found in the cytoplasm. The enzyme catalyses L-glutamate + ATP = L-glutamyl 5-phosphate + ADP. It participates in amino-acid biosynthesis; L-proline biosynthesis; L-glutamate 5-semialdehyde from L-glutamate: step 1/2. Functionally, catalyzes the transfer of a phosphate group to glutamate to form L-glutamate 5-phosphate. The protein is Glutamate 5-kinase of Streptococcus thermophilus (strain CNRZ 1066).